A 292-amino-acid polypeptide reads, in one-letter code: 33 kDa chaperonin (292 aa).

2 cysteine pairs are disulfide-bonded: Cys-230–Cys-232 and Cys-263–Cys-266.

This sequence belongs to the HSP33 family. Under oxidizing conditions two disulfide bonds are formed involving the reactive cysteines. Under reducing conditions zinc is bound to the reactive cysteines and the protein is inactive.

It is found in the cytoplasm. In terms of biological role, redox regulated molecular chaperone. Protects both thermally unfolding and oxidatively damaged proteins from irreversible aggregation. Plays an important role in the bacterial defense system toward oxidative stress. This is 33 kDa chaperonin from Cronobacter sakazakii (strain ATCC BAA-894) (Enterobacter sakazakii).